Consider the following 618-residue polypeptide: Beta-glucosidase C (618 aa).

The N-terminal stretch at 1-19 (MRVDSTVLALVALATDCLG) is a signal peptide. 5 N-linked (GlcNAc...) asparagine glycosylation sites follow: N40, N82, N104, N211, and N263. D330 is a catalytic residue. 6 N-linked (GlcNAc...) asparagine glycosylation sites follow: N417, N448, N477, N482, N502, and N517.

It belongs to the glycosyl hydrolase 3 family.

The protein localises to the secreted. The enzyme catalyses Hydrolysis of terminal, non-reducing beta-D-glucosyl residues with release of beta-D-glucose.. The protein operates within glycan metabolism; cellulose degradation. Functionally, beta-glucosidases are one of a number of cellulolytic enzymes involved in the degradation of cellulosic biomass. Catalyzes the last step releasing glucose from the inhibitory cellobiose. This Emericella nidulans (strain FGSC A4 / ATCC 38163 / CBS 112.46 / NRRL 194 / M139) (Aspergillus nidulans) protein is Beta-glucosidase C (bglC).